Here is an 89-residue protein sequence, read N- to C-terminus: MANIKSQIKRNLTNEKRRLRNKAVKSELKTHVRRFRDAVDAGDVERAGETLRIASRKLDKAVSKGVIHANQAANKKSALARTHANLAAS.

Residues 1–11 (MANIKSQIKRN) show a composition bias toward polar residues. The segment at 1 to 22 (MANIKSQIKRNLTNEKRRLRNK) is disordered.

The protein belongs to the bacterial ribosomal protein bS20 family.

Binds directly to 16S ribosomal RNA. This chain is Small ribosomal subunit protein bS20, found in Frankia casuarinae (strain DSM 45818 / CECT 9043 / HFP020203 / CcI3).